Reading from the N-terminus, the 53-residue chain is Small ribosomal subunit protein uS14m (53 aa).

The protein belongs to the universal ribosomal protein uS14 family.

It is found in the mitochondrion. The sequence is that of Small ribosomal subunit protein uS14m (RPS14) from Bigelowiella natans (Pedinomonas minutissima).